A 424-amino-acid chain; its full sequence is Tyrosine--tRNA ligase (424 aa).

Residue Y37 coordinates L-tyrosine. Positions 42–51 (PTADSLHIGS) match the 'HIGH' region motif. Residues Y174 and Q178 each coordinate L-tyrosine. The short motif at 234-238 (KFGKT) is the 'KMSKS' region element. K237 lines the ATP pocket. The 66-residue stretch at 357–422 (SGLIDALAAG…RGKKLYALVD (66 aa)) folds into the S4 RNA-binding domain.

The protein belongs to the class-I aminoacyl-tRNA synthetase family. TyrS type 1 subfamily. As to quaternary structure, homodimer.

It localises to the cytoplasm. It carries out the reaction tRNA(Tyr) + L-tyrosine + ATP = L-tyrosyl-tRNA(Tyr) + AMP + diphosphate + H(+). Its function is as follows. Catalyzes the attachment of tyrosine to tRNA(Tyr) in a two-step reaction: tyrosine is first activated by ATP to form Tyr-AMP and then transferred to the acceptor end of tRNA(Tyr). This Chromobacterium violaceum (strain ATCC 12472 / DSM 30191 / JCM 1249 / CCUG 213 / NBRC 12614 / NCIMB 9131 / NCTC 9757 / MK) protein is Tyrosine--tRNA ligase.